A 548-amino-acid chain; its full sequence is Hydroxylamine reductase (548 aa).

Residues cysteine 3, cysteine 6, cysteine 15, and cysteine 21 each coordinate [4Fe-4S] cluster. 8 residues coordinate hybrid [4Fe-2O-2S] cluster: histidine 239, glutamate 263, cysteine 307, cysteine 401, cysteine 429, cysteine 454, glutamate 489, and lysine 491. Residue cysteine 401 is modified to Cysteine persulfide.

Belongs to the HCP family. The cofactor is [4Fe-4S] cluster. Hybrid [4Fe-2O-2S] cluster serves as cofactor.

Its subcellular location is the cytoplasm. The catalysed reaction is A + NH4(+) + H2O = hydroxylamine + AH2 + H(+). Functionally, catalyzes the reduction of hydroxylamine to form NH(3) and H(2)O. The sequence is that of Hydroxylamine reductase from Desulfosudis oleivorans (strain DSM 6200 / JCM 39069 / Hxd3) (Desulfococcus oleovorans).